We begin with the raw amino-acid sequence, 132 residues long: Small ribosomal subunit protein uS8 (132 aa).

Belongs to the universal ribosomal protein uS8 family. In terms of assembly, part of the 30S ribosomal subunit. Contacts proteins S5 and S12.

In terms of biological role, one of the primary rRNA binding proteins, it binds directly to 16S rRNA central domain where it helps coordinate assembly of the platform of the 30S subunit. This Borreliella burgdorferi (strain ZS7) (Borrelia burgdorferi) protein is Small ribosomal subunit protein uS8.